The sequence spans 134 residues: Large-conductance mechanosensitive channel (134 aa).

A run of 2 helical transmembrane segments spans residues 10 to 30 (FAMRGNVVDLAVGIIIGGAFG) and 76 to 96 (GAFLQTIVDFVIIAFSIFVVI).

Belongs to the MscL family. In terms of assembly, homopentamer.

It localises to the cell inner membrane. Channel that opens in response to stretch forces in the membrane lipid bilayer. May participate in the regulation of osmotic pressure changes within the cell. This chain is Large-conductance mechanosensitive channel, found in Prosthecochloris aestuarii (strain DSM 271 / SK 413).